The sequence spans 423 residues: Glucose-1-phosphate adenylyltransferase (423 aa).

Residues Tyr107, Gly172, 187 to 188 (EK), and Ser205 each bind alpha-D-glucose 1-phosphate.

The protein belongs to the bacterial/plant glucose-1-phosphate adenylyltransferase family. In terms of assembly, homotetramer.

It carries out the reaction alpha-D-glucose 1-phosphate + ATP + H(+) = ADP-alpha-D-glucose + diphosphate. The protein operates within glycan biosynthesis; glycogen biosynthesis. Functionally, involved in the biosynthesis of ADP-glucose, a building block required for the elongation reactions to produce glycogen. Catalyzes the reaction between ATP and alpha-D-glucose 1-phosphate (G1P) to produce pyrophosphate and ADP-Glc. In Albidiferax ferrireducens (strain ATCC BAA-621 / DSM 15236 / T118) (Rhodoferax ferrireducens), this protein is Glucose-1-phosphate adenylyltransferase.